We begin with the raw amino-acid sequence, 30 residues long: Dermonecrotic toxin LlSicTox-alphaIII-1 (30 aa).

The active site involves His-12.

This sequence belongs to the arthropod phospholipase D family. Class I subfamily. Mg(2+) is required as a cofactor. In terms of processing, contains 1 disulfide bond. In terms of tissue distribution, expressed by the venom gland.

It is found in the secreted. The enzyme catalyses an N-(acyl)-sphingosylphosphocholine = an N-(acyl)-sphingosyl-1,3-cyclic phosphate + choline. The catalysed reaction is an N-(acyl)-sphingosylphosphoethanolamine = an N-(acyl)-sphingosyl-1,3-cyclic phosphate + ethanolamine. It carries out the reaction a 1-acyl-sn-glycero-3-phosphocholine = a 1-acyl-sn-glycero-2,3-cyclic phosphate + choline. It catalyses the reaction a 1-acyl-sn-glycero-3-phosphoethanolamine = a 1-acyl-sn-glycero-2,3-cyclic phosphate + ethanolamine. Dermonecrotic toxins cleave the phosphodiester linkage between the phosphate and headgroup of certain phospholipids (sphingolipid and lysolipid substrates), forming an alcohol (often choline) and a cyclic phosphate. This toxin acts on sphingomyelin (SM). It may also act on ceramide phosphoethanolamine (CPE), lysophosphatidylcholine (LPC) and lysophosphatidylethanolamine (LPE), but not on lysophosphatidylserine (LPS), and lysophosphatidylglycerol (LPG). It acts by transphosphatidylation, releasing exclusively cyclic phosphate products as second products. In vivo, intradermal injection induces dermonecrosis. Induces hemolysis, increased vascular permeability, edema, inflammatory response, and platelet aggregation. In Loxosceles laeta (South American recluse spider), this protein is Dermonecrotic toxin LlSicTox-alphaIII-1.